Here is a 290-residue protein sequence, read N- to C-terminus: Transcription factor HES-1 (290 aa).

The disordered stretch occupies residues 1-47; that stretch reads MPADTGMEKPTASPIAGAPASASHTPDKPRSASEHRKSSKPIMEKRR. The span at 10–23 shows a compositional bias: low complexity; sequence PTASPIAGAPASAS. A compositionally biased stretch (basic and acidic residues) spans 25–36; the sequence is TPDKPRSASEHR. One can recognise a bHLH domain in the interval 35-92; the sequence is HRKSSKPIMEKRRRARINESLGQLKMLILDALKKDSSRHSKLEKADILEMTVKHLRNL. Positions 111–144 constitute an Orange domain; sequence YRAGFNECMNEVTRFLSTCEGVNADVRARLLGHL. The WRPW motif signature appears at 287–290; it reads WRPW.

Transcription repression requires formation of a complex with a corepressor protein of the Groucho/TLE family.

The protein localises to the nucleus. Transcriptional repressor of genes that require a bHLH protein for their transcription. May act as a negative regulator of myogenesis by inhibiting the functions of MYOD1 and ASH1. This is Transcription factor HES-1 (HES1) from Gallus gallus (Chicken).